Reading from the N-terminus, the 124-residue chain is Ribonuclease pancreatic (124 aa).

Positions 1 to 13 (SETAAEKFERQHM) are enriched in basic and acidic residues. A disordered region spans residues 1–23 (SETAAEKFERQHMDSYSSSSSNS). Positions 7 and 10 each coordinate substrate. The active-site Proton acceptor is His-12. 4 disulfides stabilise this stretch: Cys-26/Cys-84, Cys-40/Cys-95, Cys-58/Cys-110, and Cys-65/Cys-72. Residues 41–45 (KPVNT), Lys-66, and Arg-85 contribute to the substrate site. His-119 acts as the Proton donor in catalysis.

Belongs to the pancreatic ribonuclease family. Monomer. Interacts with and forms tight 1:1 complexes with RNH1. Dimerization of two such complexes may occur. Interaction with RNH1 inhibits this protein. As to expression, pancreas.

It localises to the secreted. The enzyme catalyses an [RNA] containing cytidine + H2O = an [RNA]-3'-cytidine-3'-phosphate + a 5'-hydroxy-ribonucleotide-3'-[RNA].. It carries out the reaction an [RNA] containing uridine + H2O = an [RNA]-3'-uridine-3'-phosphate + a 5'-hydroxy-ribonucleotide-3'-[RNA].. In terms of biological role, endonuclease that catalyzes the cleavage of RNA on the 3' side of pyrimidine nucleotides. Acts on single-stranded and double-stranded RNA. The sequence is that of Ribonuclease pancreatic (RNASE1) from Camelus dromedarius (Dromedary).